We begin with the raw amino-acid sequence, 55 residues long: Large ribosomal subunit protein bL32 (55 aa).

Basic residues predominate over residues Met1–Gln19. A disordered region spans residues Met1–Ala22.

It belongs to the bacterial ribosomal protein bL32 family.

This is Large ribosomal subunit protein bL32 from Corynebacterium urealyticum (strain ATCC 43042 / DSM 7109).